The primary structure comprises 185 residues: Casparian strip membrane protein 1 (185 aa).

The Cytoplasmic portion of the chain corresponds to 1-32; sequence MKAVSIEAGERSKAKRVHGVNRGISVFDLVLR. The helical transmembrane segment at 33-53 threads the bilayer; that stretch reads IVALVGTLASAVAMGTAGQAL. The Extracellular segment spans residues 54–73; that stretch reads SFSTQIVNFEAQYDDIDAFK. The chain crosses the membrane as a helical span at residues 74–94; the sequence is FFVVSNSITCVYLALSIPISI. Residues 95 to 106 lie on the Cytoplasmic side of the membrane; sequence FHIIRSRAGKSR. A helical transmembrane segment spans residues 107–127; sequence VLLIVLDAIMLVFLTSGASAA. Topologically, residues 128 to 160 are extracellular; that stretch reads AAIVYLAHNGNTSTNWFSICQQYTDFCQRSAGS. N-linked (GlcNAc...) asparagine glycosylation occurs at N138. Residues 161-181 traverse the membrane as a helical segment; sequence LIGSFGAMALMVLLIILSSIA. At 182–185 the chain is on the cytoplasmic side; the sequence is LSRR.

Belongs to the Casparian strip membrane proteins (CASP) family. In terms of assembly, homodimer and heterodimers.

It localises to the cell membrane. Functionally, regulates membrane-cell wall junctions and localized cell wall deposition. Required for establishment of the Casparian strip membrane domain (CSD) and the subsequent formation of Casparian strips, a cell wall modification of the root endodermis that determines an apoplastic barrier between the intraorganismal apoplasm and the extraorganismal apoplasm and prevents lateral diffusion. The polypeptide is Casparian strip membrane protein 1 (Solanum demissum (Wild potato)).